The chain runs to 786 residues: Aculeacin-A acylase (786 aa).

Residues 1-22 (MTSSYMRLKAAAIAFGVIVATA) form the signal peptide. Positions 23–34 (AVPSPASGREHD) are excised as a propeptide. The substrate-binding stretch occupies residues 35–130 (GGYAALIRRA…PRDGVRAPCD (96 aa)). A propeptide spans 215-229 (AAIAAALDGTSAGIG) (spacer peptide). The segment at 220-239 (ALDGTSAGIGSNAYGLGAQA) is possible recognition-sequence of an AAC processing enzyme. Catalysis depends on Ser230, which acts as the Nucleophile. The disordered stretch occupies residues 658–689 (ACNGSPASPSTRSVGDIHTDSRGERRIPIHGG). Residues 672 to 684 (GDIHTDSRGERRI) are compositionally biased toward basic and acidic residues.

This sequence belongs to the peptidase S45 family. As to quaternary structure, heterodimer of a small subunit and a large subunit processed from the same precursor.

Its subcellular location is the secreted. In terms of biological role, catalyzes the hydrolysis of the palmitoyl moiety of the antifungal antibiotic, aculeacin-A, giving a hexapeptide moiety and a long chain fatty acid. This is Aculeacin-A acylase (aac) from Actinoplanes utahensis.